Here is a 71-residue protein sequence, read N- to C-terminus: Phenoloxidase 3 (71 aa).

Cu cation is bound by residues histidine 3 and histidine 29.

Belongs to the tyrosinase family. Cu(2+) serves as cofactor. Upon activation, a trypsin type protease cleaves prophenol oxidase to yield the active enzyme. As to expression, hemocytes and plasma.

It is found in the secreted. The catalysed reaction is 2 L-dopa + O2 = 2 L-dopaquinone + 2 H2O. It catalyses the reaction L-tyrosine + O2 = L-dopaquinone + H2O. Its function is as follows. This is a copper-containing oxidase that functions in the formation of pigments such as melanins and other polyphenolic compounds. Catalyzes the rate-limiting conversions of tyrosine to DOPA, DOPA to DOPA-quinone and possibly 5,6 dihydroxyindole to indole-5'6 quinone. The sequence is that of Phenoloxidase 3 from Sarcophaga argyrostoma (Flesh fly).